The chain runs to 1235 residues: Spike glycoprotein (1235 aa).

Residues M1–L13 form the signal peptide. A receptor binding site region spans residues M1 to K330. Topologically, residues G14–P1176 are extracellular. Residues Y15–T296 enclose the BetaCoV S1-NTD domain. 5 disulfides stabilise this stretch: C21–C158, C153–C187, C165–C246, C284–C294, and C329–C354. N-linked (GlcNAc...) asparagine; by host glycosylation is found at N31, N60, and N134. N192 carries N-linked (GlcNAc...) asparagine; by host glycosylation. Residues P327–T477 enclose the BetaCoV S1-CTD domain. N357 is a glycosylation site (N-linked (GlcNAc...) asparagine; by host). Disulfide bonds link C372-C425 and C384-C475. N-linked (GlcNAc...) asparagine; by host glycans are attached at residues N435, N536, N568, N576, N599, N648, and N665. Fusion peptide stretches follow at residues S781–Y802 and E800–F820. N-linked (GlcNAc...) asparagine; by host glycosylation is present at N804. Residues C805 and C816 are joined by a disulfide bond. Positions Q881–F931 are heptad repeat 1. Residues Q910–I954 adopt a coiled-coil conformation. N1091, N1101, N1120, N1136, and N1157 each carry an N-linked (GlcNAc...) asparagine; by host glycan. The tract at residues A1125 to E1165 is heptad repeat 2. Positions T1138–V1166 form a coiled coil. Residues W1177 to I1197 traverse the membrane as a helical segment. Over C1198 to D1235 the chain is Cytoplasmic. The short motif at S1231 to D1235 is the KxHxx element.

It belongs to the betacoronaviruses spike protein family. Homotrimer; each monomer consists of a S1 and a S2 subunit. The resulting peplomers protrude from the virus surface as spikes. Post-translationally, specific enzymatic cleavages in vivo yield mature proteins. The precursor is processed into S1 and S2 by host cell furin or another cellular protease to yield the mature S1 and S2 proteins. Additionally, a second cleavage leads to the release of a fusion peptide after viral attachment to host cell receptor. The cytoplasmic Cys-rich domain is palmitoylated. Spike glycoprotein is digested within host endosomes.

The protein localises to the virion membrane. It is found in the host endoplasmic reticulum-Golgi intermediate compartment membrane. The protein resides in the host cell membrane. Functionally, attaches the virion to the cell membrane by interacting with host receptor, initiating the infection. In terms of biological role, mediates fusion of the virion and cellular membranes by acting as a class I viral fusion protein. Under the current model, the protein has at least three conformational states: pre-fusion native state, pre-hairpin intermediate state, and post-fusion hairpin state. During viral and target cell membrane fusion, the coiled coil regions (heptad repeats) assume a trimer-of-hairpins structure, positioning the fusion peptide in close proximity to the C-terminal region of the ectodomain. The formation of this structure appears to drive apposition and subsequent fusion of viral and target cell membranes. Acts as a viral fusion peptide which is unmasked following S2 cleavage occurring upon virus endocytosis. The sequence is that of Spike glycoprotein from Mus musculus (Mouse).